A 267-amino-acid polypeptide reads, in one-letter code: Phosphoethanolamine/phosphocholine phosphatase (267 aa).

Catalysis depends on Asp32, which acts as the Nucleophile. Mg(2+)-binding residues include Asp32 and Asp34. Asp34 serves as the catalytic Proton donor. Residues Asp43 and Asp123 each coordinate substrate. Asp203 lines the Mg(2+) pocket.

The protein belongs to the HAD-like hydrolase superfamily. PHOSPHO family. It depends on Mg(2+) as a cofactor. Expressed at sites of mineralization in bone and cartilage. Highly expressed in osteoblast cell line SaOS-2 which produces a mineralized matrix, but not in MG-63 cell line, which do not mineralize.

The protein resides in the extracellular vesicle. It carries out the reaction phosphoethanolamine + H2O = ethanolamine + phosphate. It catalyses the reaction phosphocholine + H2O = choline + phosphate. Phosphatase that has a high activity toward phosphoethanolamine (PEA) and phosphocholine (PCho). Involved in the generation of inorganic phosphate for bone mineralization. Acts in a non-redundant manner with PHOSPHO1 in skeletal mineralization: while PHOSPHO1 mediates the initiation of hydroxyapatite crystallization in the matrix vesicles (MVs), ALPL/TNAP catalyzes the spread of hydroxyapatite crystallization in the extracellular matrix. In Homo sapiens (Human), this protein is Phosphoethanolamine/phosphocholine phosphatase.